The primary structure comprises 332 residues: PRKC apoptosis WT1 regulator protein (332 aa).

Composition is skewed to polar residues over residues 1–14 (MATGGYRSSGSTTD) and 52–62 (AQTTAAGTSEL). Positions 1 to 253 (MATGGYRSSG…HNRDTSAPAN (253 aa)) are disordered. Positions 61 to 65 (ELNHG) match the B30.2/SPRY domain-binding motif motif. The span at 65-79 (GPAGAAAPAAPGPGA) shows a compositional bias: low complexity. Positions 137–153 (RKGKGQIEKRKLREKRR) match the Nuclear localization signal motif. Residues 137-195 (RKGKGQIEKRKLREKRRSTGVVNIPAAECLDEYEDDEAGQKERKREDAITQQNTIQNEA) are selective for apoptosis induction in cancer cells (SAC). Residue threonine 155 is modified to Phosphothreonine; by PKA. Over residues 174–184 (AGQKERKREDA) the composition is skewed to basic and acidic residues. Residues 176–198 (QKERKREDAITQQNTIQNEAASL) are a coiled coil. A compositionally biased stretch (polar residues) spans 185–195 (ITQQNTIQNEA). Serine 223 carries the post-translational modification Phosphoserine. Basic and acidic residues predominate over residues 234–247 (PRTDRSGFSRHNRD). Residues 292-332 (IGKLKEEIDLLNRDLDDMEDENEQLKQENKTLLKVVGQLTR) form a leucine-zipper region.

In terms of assembly, homooligomer. Interacts (via the C-terminal region) with WT1. Interacts with THAP1. Interacts with AATF. Interacts with BACE1. Interacts with SPSB1 (via B30.2/SPRY domain); this interaction is direct and occurs in association with the Elongin BC complex. Interacts with SPSB2 (via B30.2/SPRY domain); this interaction occurs in association with the Elongin BC complex. Interacts with SPSB4 (via B30.2/SPRY domain); this interaction occurs in association with the Elongin BC complex. Component of a ternary complex composed of SQSTM1 and PRKCZ. Interacts with actin. In terms of processing, preferentially phosphorylated at the Thr-155 by PKC in cancer cells.

The protein resides in the cytoplasm. It is found in the nucleus. Its function is as follows. Pro-apoptotic protein capable of selectively inducing apoptosis in cancer cells, sensitizing the cells to diverse apoptotic stimuli and causing regression of tumors in animal models. Induces apoptosis in certain cancer cells by activation of the Fas prodeath pathway and coparallel inhibition of NF-kappa-B transcriptional activity. Inhibits the transcriptional activation and augments the transcriptional repression mediated by WT1. Down-regulates the anti-apoptotic protein BCL2 via its interaction with WT1. Also seems to be a transcriptional repressor by itself. May be directly involved in regulating the amyloid precursor protein (APP) cleavage activity of BACE1. This Rattus norvegicus (Rat) protein is PRKC apoptosis WT1 regulator protein (Pawr).